The chain runs to 203 residues: Holliday junction branch migration complex subunit RuvA (203 aa).

A domain I region spans residues methionine 1–leucine 63. A domain II region spans residues threonine 64–asparagine 142. Positions aspartate 143–asparagine 149 are flexible linker. Residues isoleucine 150–leucine 203 form a domain III region.

Belongs to the RuvA family. In terms of assembly, homotetramer. Forms an RuvA(8)-RuvB(12)-Holliday junction (HJ) complex. HJ DNA is sandwiched between 2 RuvA tetramers; dsDNA enters through RuvA and exits via RuvB. An RuvB hexamer assembles on each DNA strand where it exits the tetramer. Each RuvB hexamer is contacted by two RuvA subunits (via domain III) on 2 adjacent RuvB subunits; this complex drives branch migration. In the full resolvosome a probable DNA-RuvA(4)-RuvB(12)-RuvC(2) complex forms which resolves the HJ.

It localises to the cytoplasm. Functionally, the RuvA-RuvB-RuvC complex processes Holliday junction (HJ) DNA during genetic recombination and DNA repair, while the RuvA-RuvB complex plays an important role in the rescue of blocked DNA replication forks via replication fork reversal (RFR). RuvA specifically binds to HJ cruciform DNA, conferring on it an open structure. The RuvB hexamer acts as an ATP-dependent pump, pulling dsDNA into and through the RuvAB complex. HJ branch migration allows RuvC to scan DNA until it finds its consensus sequence, where it cleaves and resolves the cruciform DNA. In Rickettsia akari (strain Hartford), this protein is Holliday junction branch migration complex subunit RuvA.